The sequence spans 252 residues: 5-oxoprolinase subunit A (252 aa).

This sequence belongs to the LamB/PxpA family. As to quaternary structure, forms a complex composed of PxpA, PxpB and PxpC.

It catalyses the reaction 5-oxo-L-proline + ATP + 2 H2O = L-glutamate + ADP + phosphate + H(+). Its function is as follows. Catalyzes the cleavage of 5-oxoproline to form L-glutamate coupled to the hydrolysis of ATP to ADP and inorganic phosphate. The sequence is that of 5-oxoprolinase subunit A from Corynebacterium glutamicum (strain ATCC 13032 / DSM 20300 / JCM 1318 / BCRC 11384 / CCUG 27702 / LMG 3730 / NBRC 12168 / NCIMB 10025 / NRRL B-2784 / 534).